Here is a 273-residue protein sequence, read N- to C-terminus: Type III pantothenate kinase (273 aa).

ATP is bound at residue 5–12 (DVGNSHVV). A substrate-binding site is contributed by 112-115 (GTDL). Residue Asp114 is the Proton acceptor of the active site. K(+) is bound at residue Asp134. Position 137 (Thr137) interacts with ATP. Thr189 contacts substrate.

This sequence belongs to the type III pantothenate kinase family. In terms of assembly, homodimer. NH4(+) is required as a cofactor. It depends on K(+) as a cofactor.

It is found in the cytoplasm. It carries out the reaction (R)-pantothenate + ATP = (R)-4'-phosphopantothenate + ADP + H(+). Its pathway is cofactor biosynthesis; coenzyme A biosynthesis; CoA from (R)-pantothenate: step 1/5. In terms of biological role, catalyzes the phosphorylation of pantothenate (Pan), the first step in CoA biosynthesis. The protein is Type III pantothenate kinase of Treponema pallidum (strain Nichols).